Consider the following 1040-residue polypeptide: DNA cross-link repair 1A protein (1040 aa).

The interval 1 to 190 (MLEDISEEDI…RAGDHPFSSP (190 aa)) is nuclear localization region. Residues 15-76 (SKRKPKRVDP…LGNAGCQTSV (62 aa)) are disordered. Residues 53–65 (RAAEAKEVKDHEV) are compositionally biased toward basic and acidic residues. The segment at 119–149 (DGYCPNCQMPFSSLIGQTPRWHVFECLDSPP) adopts a UBZ4-type zinc-finger fold. 4 residues coordinate Zn(2+): Cys-122, Cys-125, His-140, and Cys-144. Glycyl lysine isopeptide (Lys-Gly) (interchain with G-Cter in SUMO2) cross-links involve residues Lys-202, Lys-236, Lys-269, Lys-353, Lys-361, Lys-429, Lys-488, Lys-508, Lys-517, Lys-533, and Lys-536. The interval 396–614 (LPYDLACTGG…KSLSDLEFDA (219 aa)) is nuclear focus formation. Disordered stretches follow at residues 582-602 (GINL…CKRK) and 623-651 (SVEL…ACQK). Phosphoserine is present on Ser-590. Residues Lys-668, Lys-670, and Lys-674 each participate in a glycyl lysine isopeptide (Lys-Gly) (interchain with G-Cter in SUMO2) cross-link.

It belongs to the DNA repair metallo-beta-lactamase (DRMBL) family. In terms of assembly, binds constitutively to TP53BP1. Binds CDC27, which is itself a component of the anaphase promoting complex (APC). Binds PIAS1. In terms of tissue distribution, expressed in brain, heart, kidney, liver, pancreas, placenta and skeletal muscle.

It is found in the nucleus. It carries out the reaction a beta-lactam + H2O = a substituted beta-amino acid. Its activity is regulated as follows. Beta-lactamase activity is inhibited by sulbactam. Its function is as follows. May be required for DNA interstrand cross-link repair. Also required for checkpoint mediated cell cycle arrest in early prophase in response to mitotic spindle poisons. Possesses beta-lactamase activity, catalyzing the hydrolysis of penicillin G and nitrocefin. Exhibits no activity towards other beta-lactam antibiotic classes including cephalosporins (cefotaxime) and carbapenems (imipenem). This is DNA cross-link repair 1A protein (DCLRE1A) from Homo sapiens (Human).